Consider the following 250-residue polypeptide: rRNA methyltransferase 2, mitochondrial (250 aa).

The transit peptide at 1–35 directs the protein to the mitochondrion; it reads MRLVFTGNCVFKRLLHTEIGGKYAKQQPRNLKGRS. Residues 90-93, Asp119, 136-137, and Asp161 contribute to the S-adenosyl-L-methionine site; these read PGSW and DF. Residue Lys201 is the Proton acceptor of the active site.

Belongs to the class I-like SAM-binding methyltransferase superfamily. RNA methyltransferase RlmE family.

Its subcellular location is the mitochondrion. The catalysed reaction is a uridine in rRNA + S-adenosyl-L-methionine = a 2'-O-methyluridine in rRNA + S-adenosyl-L-homocysteine + H(+). S-adenosyl-L-methionine-dependent 2'-O-ribose methyltransferase that catalyzes the formation of 2'-O-methyluridine at position 1579 (Um1579) in the mitochondrial large subunit ribosomal RNA (mtLSU rRNA), a universally conserved modification in the peptidyl transferase domain of the mtLSU rRNA. This activity may require prior 2'-O-methylguanosine modification at position 1580 (Gm1580) by MRM3. Essential for late-stage assembly of mtLSU required for efficient translation of mitochondrial DNA encoded proteins; methyltransferase activity is not required for this function. Essential for mitochondrial respiratory function. This is rRNA methyltransferase 2, mitochondrial from Drosophila melanogaster (Fruit fly).